The primary structure comprises 141 residues: Alpha-lactalbumin (141 aa).

Positions 1-19 (MMSFVSLLVVGILFPAIQA) are cleaved as a signal peptide. The C-type lysozyme domain occupies 20–141 (KQFTKCELSQ…KLDQWLCEKM (122 aa)). 4 cysteine pairs are disulfide-bonded: C25-C138, C47-C129, C80-C95, and C91-C109. K97, D100, D102, D105, and D106 together coordinate Ca(2+).

Belongs to the glycosyl hydrolase 22 family. As to quaternary structure, lactose synthase (LS) is a heterodimer of a catalytic component, beta1,4-galactosyltransferase (beta4Gal-T1) and a regulatory component, alpha-lactalbumin (LA). In terms of tissue distribution, mammary gland specific. Secreted in milk.

It localises to the secreted. Regulatory subunit of lactose synthase, changes the substrate specificity of galactosyltransferase in the mammary gland making glucose a good acceptor substrate for this enzyme. This enables LS to synthesize lactose, the major carbohydrate component of milk. In other tissues, galactosyltransferase transfers galactose onto the N-acetylglucosamine of the oligosaccharide chains in glycoproteins. This is Alpha-lactalbumin (LALBA) from Sus scrofa (Pig).